Consider the following 88-residue polypeptide: Apolipoprotein C-I (88 aa).

The signal sequence occupies residues 1 to 26 (MRLFIALPVLIVVVAMALEGPAPAQA).

This sequence belongs to the apolipoprotein C1 family.

The protein resides in the secreted. Its function is as follows. Inhibitor of lipoprotein binding to the low density lipoprotein (LDL) receptor, LDL receptor-related protein, and very low density lipoprotein (VLDL) receptor. Associates with high density lipoproteins (HDL) and the triacylglycerol-rich lipoproteins in the plasma and makes up about 10% of the protein of the VLDL and 2% of that of HDL. Appears to interfere directly with fatty acid uptake and is also the major plasma inhibitor of cholesteryl ester transfer protein (CETP). Modulates the interaction of APOE with beta-migrating VLDL and inhibits binding of beta-VLDL to the LDL receptor-related protein. Binds free fatty acids and reduces their intracellular esterification. The chain is Apolipoprotein C-I (Apoc1) from Grammomys surdaster (African woodland thicket rat).